Reading from the N-terminus, the 478-residue chain is Transcript termination protein A18 (478 aa).

The region spanning 98-254 is the Helicase ATP-binding domain; sequence KLSTHRPMYM…NDVVNVLKVS (157 aa). 111 to 118 lines the ATP pocket; that stretch reads LSCGFGKT. Residues 204–207 carry the DESH box motif; it reads DESH. The region spanning 302–454 is the Helicase C-terminal domain; the sequence is PRNNLIVDTV…IVSVSTDKLG (153 aa). Positions 456–478 are disordered; the sequence is QQEGKEGTKEEPALTKAFSSQIR. A compositionally biased stretch (basic and acidic residues) spans 458–468; sequence EGKEGTKEEPA.

It belongs to the helicase family. Poxviruses subfamily. As to quaternary structure, interacts with G2. Might be part of a transcription complex composed at least of G2, A18, and H5.

It is found in the virion. In terms of biological role, DNA helicase which seems to act as a postreplicative transcription termination factor. Involved in ATP-dependent release of nascent RNA. Forms a stable complex with single-stranded DNA, and to a lesser extent RNA. This is Transcript termination protein A18 from Oryctolagus cuniculus (Rabbit).